Here is a 400-residue protein sequence, read N- to C-terminus: Chaperone protein DnaJ (400 aa).

The J domain occupies 4 to 69 (DYYETLGVTR…DKRRRYDQFG (66 aa)). The segment at 156–237 (GVEKTLKVKR…CYGEGIKLGE (82 aa)) adopts a CR-type zinc-finger fold. Zn(2+) is bound by residues cysteine 169, cysteine 172, cysteine 185, cysteine 188, cysteine 211, cysteine 214, cysteine 225, and cysteine 228. CXXCXGXG motif repeat units lie at residues 169-176 (CEVCNGTG), 185-192 (CQTCHGSG), 211-218 (CPTCGGEG), and 225-232 (CTACYGEG).

The protein belongs to the DnaJ family. In terms of assembly, homodimer. The cofactor is Zn(2+).

The protein localises to the cytoplasm. Functionally, participates actively in the response to hyperosmotic and heat shock by preventing the aggregation of stress-denatured proteins and by disaggregating proteins, also in an autonomous, DnaK-independent fashion. Unfolded proteins bind initially to DnaJ; upon interaction with the DnaJ-bound protein, DnaK hydrolyzes its bound ATP, resulting in the formation of a stable complex. GrpE releases ADP from DnaK; ATP binding to DnaK triggers the release of the substrate protein, thus completing the reaction cycle. Several rounds of ATP-dependent interactions between DnaJ, DnaK and GrpE are required for fully efficient folding. Also involved, together with DnaK and GrpE, in the DNA replication of plasmids through activation of initiation proteins. This chain is Chaperone protein DnaJ, found in Chlorobium chlorochromatii (strain CaD3).